The primary structure comprises 614 residues: Adenylate kinase 7 (614 aa).

The interval 258 to 503 (PIKICILGPP…KEIGKPRNYG (246 aa)) is adenylate kinase. 268–273 (AVGKSS) provides a ligand contact to ATP. Residues 288-346 (KMKDVIAEAIAKLEAIVAPKDSVEGEEEGEEEEEEENVDDAQELLDGIKESMEQNAGRL) form an NMP region. The segment at 308-327 (DSVEGEEEGEEEEEEENVDD) is disordered. The span at 311 to 327 (EGEEEGEEEEEEENVDD) shows a compositional bias: acidic residues. AMP contacts are provided by residues 323 to 346 (ENVD…AGRL), 373 to 376 (GFPK), and glutamine 380. The stretch at 376 to 568 (KTYDQAKDLF…EERELLEVQS (193 aa)) forms a coiled coil. The tract at residues 428-438 (NLPESVVAGTH) is LID. Arginine 446 contributes to the AMP binding site. Residue glycine 478 coordinates ATP. The tract at residues 570–614 (PLRNYLMTYVMPTLMQGLNECCKVRPEDPVDFLAEYLFKNNPEMQ) is DPY-30.

In the central section; belongs to the adenylate kinase family. The protein in the C-terminal section; belongs to the dpy-30 family.

It is found in the cytoplasm. The protein localises to the cytosol. It localises to the cell projection. Its subcellular location is the cilium. The protein resides in the flagellum. It catalyses the reaction AMP + ATP = 2 ADP. The enzyme catalyses a 2'-deoxyribonucleoside 5'-diphosphate + ATP = a 2'-deoxyribonucleoside 5'-triphosphate + ADP. It carries out the reaction a ribonucleoside 5'-diphosphate + ATP = a ribonucleoside 5'-triphosphate + ADP. Nucleoside monophosphate (NMP) kinase that catalyzes the reversible transfer of the terminal phosphate group between nucleoside triphosphates and monophosphates. Has highest activity toward AMP, and weaker activity toward dAMP, CMP and dCMP. Also displays broad nucleoside diphosphate kinase activity. Involved in maintaining ciliary structure and function. This chain is Adenylate kinase 7 (Ak7), found in Mus musculus (Mouse).